A 403-amino-acid polypeptide reads, in one-letter code: Phosphoglycerate kinase (403 aa).

Residues 21–23, Arg-36, 59–62, Arg-119, and Arg-154 each bind substrate; these read DFN and HLGR. Residues Lys-207, Gly-299, Glu-330, and 357–360 contribute to the ATP site; that span reads GGDA.

The protein belongs to the phosphoglycerate kinase family. Monomer.

It localises to the cytoplasm. It catalyses the reaction (2R)-3-phosphoglycerate + ATP = (2R)-3-phospho-glyceroyl phosphate + ADP. The protein operates within carbohydrate degradation; glycolysis; pyruvate from D-glyceraldehyde 3-phosphate: step 2/5. The polypeptide is Phosphoglycerate kinase (Chlamydia felis (strain Fe/C-56) (Chlamydophila felis)).